Here is a 467-residue protein sequence, read N- to C-terminus: tRNA-2-methylthio-N(6)-dimethylallyladenosine synthase (467 aa).

The region spanning Arg4–Arg124 is the MTTase N-terminal domain. Residues Cys13, Cys49, Cys87, Cys161, Cys165, and Cys168 each contribute to the [4Fe-4S] cluster site. The 233-residue stretch at Gln147–Ala379 folds into the Radical SAM core domain. Residues Gln382–Glu444 enclose the TRAM domain.

It belongs to the methylthiotransferase family. MiaB subfamily. In terms of assembly, monomer. It depends on [4Fe-4S] cluster as a cofactor.

The protein resides in the cytoplasm. It carries out the reaction N(6)-dimethylallyladenosine(37) in tRNA + (sulfur carrier)-SH + AH2 + 2 S-adenosyl-L-methionine = 2-methylsulfanyl-N(6)-dimethylallyladenosine(37) in tRNA + (sulfur carrier)-H + 5'-deoxyadenosine + L-methionine + A + S-adenosyl-L-homocysteine + 2 H(+). Catalyzes the methylthiolation of N6-(dimethylallyl)adenosine (i(6)A), leading to the formation of 2-methylthio-N6-(dimethylallyl)adenosine (ms(2)i(6)A) at position 37 in tRNAs that read codons beginning with uridine. The polypeptide is tRNA-2-methylthio-N(6)-dimethylallyladenosine synthase (Rhodospirillum rubrum (strain ATCC 11170 / ATH 1.1.1 / DSM 467 / LMG 4362 / NCIMB 8255 / S1)).